Here is a 495-residue protein sequence, read N- to C-terminus: UDP-glycosyltransferase 73C11 (495 aa).

Catalysis depends on histidine 24, which acts as the Proton acceptor. Histidine 24 is a binding site for an anthocyanidin. Aspartate 129 acts as the Charge relay in catalysis. UDP-alpha-D-glucose is bound by residues glutamine 358, histidine 373, tryptophan 376, asparagine 377, serine 378, and glutamate 381. Glycine 396 contributes to the an anthocyanidin binding site. Positions 397 and 398 each coordinate UDP-alpha-D-glucose.

The protein belongs to the UDP-glycosyltransferase family.

It carries out the reaction oleanolate + UDP-alpha-D-glucose = oleanolate 3-O-beta-D-glucoside + UDP + H(+). Its function is as follows. Catalyzes the transfer of a glucose (Glc) moiety from UDP-Glc to the C-3 position of the oleanane sapogenins oleanolate and hederagenin, and to the C-28 carboxylic group of the lupane sapogenin betulinate. The monoglucosylated hederagenin 3-O-beta-D-glucoside is a feeding deterrent of the yellow-striped flea beetle (Phyllotreta nemorum). This chain is UDP-glycosyltransferase 73C11, found in Barbarea vulgaris (Yellow rocket).